The sequence spans 221 residues: Large ribosomal subunit protein uL3 (221 aa).

The disordered stretch occupies residues His131–Gly165.

The protein belongs to the universal ribosomal protein uL3 family. In terms of assembly, part of the 50S ribosomal subunit. Forms a cluster with proteins L14 and L19.

Its function is as follows. One of the primary rRNA binding proteins, it binds directly near the 3'-end of the 23S rRNA, where it nucleates assembly of the 50S subunit. This is Large ribosomal subunit protein uL3 from Phytoplasma australiense.